The sequence spans 344 residues: Thiamine thiazole synthase (344 aa).

Substrate contacts are provided by residues Cys-90, 111–112 (EA), Gly-119, and Val-184. Cys-232 is subject to 2,3-didehydroalanine (Cys). Residues Asp-234, His-249, Met-301, and 311-313 (RMG) each bind substrate.

Belongs to the THI4 family. Homooctamer. Interacts with cyp-41. Fe cation is required as a cofactor. In terms of processing, during the catalytic reaction, a sulfide is transferred from Cys-232 to a reaction intermediate, generating a dehydroalanine residue.

Its subcellular location is the cytoplasm. It localises to the nucleus. The enzyme catalyses [ADP-thiazole synthase]-L-cysteine + glycine + NAD(+) = [ADP-thiazole synthase]-dehydroalanine + ADP-5-ethyl-4-methylthiazole-2-carboxylate + nicotinamide + 3 H2O + 2 H(+). In terms of biological role, involved in biosynthesis of the thiamine precursor thiazole. Catalyzes the conversion of NAD and glycine to adenosine diphosphate 5-(2-hydroxyethyl)-4-methylthiazole-2-carboxylic acid (ADT), an adenylated thiazole intermediate. The reaction includes an iron-dependent sulfide transfer from a conserved cysteine residue of the protein to a thiazole intermediate. The enzyme can only undergo a single turnover, which suggests it is a suicide enzyme. May have additional roles in adaptation to various stress conditions and in DNA damage tolerance. This chain is Thiamine thiazole synthase, found in Neurospora crassa (strain ATCC 24698 / 74-OR23-1A / CBS 708.71 / DSM 1257 / FGSC 987).